A 395-amino-acid polypeptide reads, in one-letter code: DNA polymerase IV (395 aa).

Positions 7–187 (FFHVDIDAFF…LPLKDVWGVG (181 aa)) constitute a UmuC domain. Mg(2+)-binding residues include Asp11 and Asp105. The active site involves Glu106.

Belongs to the DNA polymerase type-Y family. As to quaternary structure, monomer. The cofactor is Mg(2+).

The protein resides in the cytoplasm. It carries out the reaction DNA(n) + a 2'-deoxyribonucleoside 5'-triphosphate = DNA(n+1) + diphosphate. In terms of biological role, poorly processive, error-prone DNA polymerase involved in untargeted mutagenesis. Copies undamaged DNA at stalled replication forks, which arise in vivo from mismatched or misaligned primer ends. These misaligned primers can be extended by PolIV. Exhibits no 3'-5' exonuclease (proofreading) activity. May be involved in translesional synthesis, in conjunction with the beta clamp from PolIII. This chain is DNA polymerase IV, found in Treponema denticola (strain ATCC 35405 / DSM 14222 / CIP 103919 / JCM 8153 / KCTC 15104).